Reading from the N-terminus, the 350-residue chain is Putative ankyrin repeat protein RBE_0589 (350 aa).

ANK repeat units follow at residues 81 to 110 (DGFT…NPNI), 114 to 151 (DIVT…EPTD), and 153 to 182 (SGWT…NLDI).

The sequence is that of Putative ankyrin repeat protein RBE_0589 from Rickettsia bellii (strain RML369-C).